The primary structure comprises 1150 residues: ATP-dependent helicase/deoxyribonuclease subunit B (1150 aa).

Position 8–15 (8–15 (GRAGSGKS)) interacts with ATP. [4Fe-4S] cluster-binding residues include C789, C1109, C1112, and C1118.

The protein belongs to the helicase family. AddB/RexB type 1 subfamily. Heterodimer of AddA and AddB. Requires Mg(2+) as cofactor. [4Fe-4S] cluster is required as a cofactor.

Its function is as follows. The heterodimer acts as both an ATP-dependent DNA helicase and an ATP-dependent, dual-direction single-stranded exonuclease. Recognizes the chi site generating a DNA molecule suitable for the initiation of homologous recombination. The AddB subunit has 5' -&gt; 3' nuclease activity but not helicase activity. This Clostridium kluyveri (strain NBRC 12016) protein is ATP-dependent helicase/deoxyribonuclease subunit B.